We begin with the raw amino-acid sequence, 378 residues long: Mannitol-1-phosphate 5-dehydrogenase (378 aa).

4-15 (SVHFGAGNIGRG) contributes to the NAD(+) binding site.

This sequence belongs to the mannitol dehydrogenase family.

It carries out the reaction D-mannitol 1-phosphate + NAD(+) = beta-D-fructose 6-phosphate + NADH + H(+). In Streptococcus pneumoniae (strain JJA), this protein is Mannitol-1-phosphate 5-dehydrogenase.